The primary structure comprises 221 residues: Ependymin-1 (221 aa).

The first 21 residues, 1–21 (MQAFAVAALSIWLCLGATTLA), serve as a signal peptide directing secretion. 3 N-linked (GlcNAc...) asparagine glycosylation sites follow: asparagine 33, asparagine 73, and asparagine 97.

It belongs to the ependymin family. Binds calcium through the terminal sialic acids. As to expression, EPDs are synthesized in the meninx and secreted in the cerebrospinal fluid.

Its subcellular location is the secreted. May play a role in neural plasticity. May be involved during axon regeneration. The polypeptide is Ependymin-1 (epd1) (Oncorhynchus mykiss (Rainbow trout)).